Consider the following 473-residue polypeptide: Argininosuccinate lyase (473 aa).

The protein belongs to the lyase 1 family. Argininosuccinate lyase subfamily.

It is found in the cytoplasm. It catalyses the reaction 2-(N(omega)-L-arginino)succinate = fumarate + L-arginine. It participates in amino-acid biosynthesis; L-arginine biosynthesis; L-arginine from L-ornithine and carbamoyl phosphate: step 3/3. The sequence is that of Argininosuccinate lyase from Streptomyces clavuligerus.